The primary structure comprises 311 residues: Transcription initiation factor IIB (311 aa).

A TFIIB-type zinc finger spans residues Lys11–Asp42. Zn(2+) contacts are provided by Cys15, Cys18, Cys34, and Cys37. 2 tandem repeats follow at residues Ser128–Leu211 and Asp222–Glu303.

It belongs to the TFIIB family.

Functionally, stabilizes TBP binding to an archaeal box-A promoter. Also responsible for recruiting RNA polymerase II to the pre-initiation complex (DNA-TBP-TFIIB). The polypeptide is Transcription initiation factor IIB (Methanosphaera stadtmanae (strain ATCC 43021 / DSM 3091 / JCM 11832 / MCB-3)).